A 259-amino-acid polypeptide reads, in one-letter code: Phosphatidylglycerol--prolipoprotein diacylglyceryl transferase (259 aa).

Helical transmembrane passes span 10-30, 50-70, 86-106, and 112-132; these read IGLL…LFAY, IISW…ILFY, WKGG…MYIF, and IKFL…IFLG. R133 lines the a 1,2-diacyl-sn-glycero-3-phospho-(1'-sn-glycerol) pocket. 3 consecutive transmembrane segments (helical) span residues 169–189, 197–217, and 227–247; these read LYEA…LFFF, GMLF…IEFV, and ILFN…ILGI.

This sequence belongs to the Lgt family.

The protein resides in the cell inner membrane. It carries out the reaction L-cysteinyl-[prolipoprotein] + a 1,2-diacyl-sn-glycero-3-phospho-(1'-sn-glycerol) = an S-1,2-diacyl-sn-glyceryl-L-cysteinyl-[prolipoprotein] + sn-glycerol 1-phosphate + H(+). The protein operates within protein modification; lipoprotein biosynthesis (diacylglyceryl transfer). In terms of biological role, catalyzes the transfer of the diacylglyceryl group from phosphatidylglycerol to the sulfhydryl group of the N-terminal cysteine of a prolipoprotein, the first step in the formation of mature lipoproteins. The sequence is that of Phosphatidylglycerol--prolipoprotein diacylglyceryl transferase from Ehrlichia ruminantium (strain Welgevonden).